Consider the following 464-residue polypeptide: Glutamate--tRNA ligase (464 aa).

The 'HIGH' region motif lies at 9 to 19 (PSPTGYLHIGG). Positions 242–246 (KISKR) match the 'KMSKS' region motif. Residue Lys245 participates in ATP binding.

This sequence belongs to the class-I aminoacyl-tRNA synthetase family. Glutamate--tRNA ligase type 1 subfamily. Monomer.

It is found in the cytoplasm. It catalyses the reaction tRNA(Glu) + L-glutamate + ATP = L-glutamyl-tRNA(Glu) + AMP + diphosphate. Its function is as follows. Catalyzes the attachment of glutamate to tRNA(Glu) in a two-step reaction: glutamate is first activated by ATP to form Glu-AMP and then transferred to the acceptor end of tRNA(Glu). In Neisseria gonorrhoeae (strain ATCC 700825 / FA 1090), this protein is Glutamate--tRNA ligase.